A 90-amino-acid chain; its full sequence is Small ribosomal subunit protein uS15c (90 aa).

The protein belongs to the universal ribosomal protein uS15 family. Part of the 30S ribosomal subunit.

It localises to the plastid. The protein resides in the chloroplast. The polypeptide is Small ribosomal subunit protein uS15c (rps15-A) (Brachypodium distachyon (Purple false brome)).